Here is a 270-residue protein sequence, read N- to C-terminus: Interleukin-33 (270 aa).

Positions 1 to 65 are homeodomain-like HTH domain; that stretch reads MKPKMKYSTN…EACYFRRETT (65 aa). Residues 1-94 constitute a propeptide that is removed on maturation; sequence MKPKMKYSTN…CQQQSTVESF (94 aa). The tract at residues 64 to 111 is interaction with RELA; that stretch reads TTKRPSLKTDRKHKRHLVLAACQQQSTVESFAFGISGVQKYTRALHDS.

This sequence belongs to the IL-1 family. Highly divergent. Forms a 1:1:1 heterotrimeric complex with its primary high-affinity receptor IL1RL1 and the coreceptor IL1RAP. Interacts with cargo receptor TMED10; the interaction mediates the translocation from the cytoplasm into the ERGIC (endoplasmic reticulum-Golgi intermediate compartment) and thereby secretion. In terms of processing, the full-length protein can be released from cells and is able to signal via the IL1RL1/ST2 receptor. However, proteolytic processing by CELA1, CSTG/cathepsin G and ELANE/neutrophil elastase produces C-terminal peptides that are more active than the unprocessed full-length protein. May also be proteolytically processed by calpains. Proteolytic cleavage mediated by apoptotic caspases including CASP3 and CASP7 results in IL33 inactivation. In vitro proteolytic cleavage by CASP1 was reported but could not be confirmed in vivo suggesting that IL33 is probably not a direct substrate for that caspase.

Its subcellular location is the nucleus. The protein localises to the chromosome. The protein resides in the cytoplasm. It localises to the cytoplasmic vesicle. It is found in the secretory vesicle. Its subcellular location is the secreted. Cytokine that binds to and signals through the IL1RL1/ST2 receptor which in turn activates NF-kappa-B and MAPK signaling pathways in target cells. Involved in the maturation of Th2 cells inducing the secretion of T-helper type 2-associated cytokines. Also involved in activation of mast cells, basophils, eosinophils and natural killer cells. Acts as a chemoattractant for Th2 cells, and may function as an 'alarmin', that amplifies immune responses during tissue injury. Induces rapid UCP2-dependent mitochondrial rewiring that attenuates the generation of reactive oxygen species and preserves the integrity of Krebs cycle required for persistent production of itaconate and subsequent GATA3-dependent differentiation of inflammation-resolving alternatively activated macrophages. In terms of biological role, in quiescent endothelia the uncleaved form is constitutively and abundantly expressed, and acts as a chromatin-associated nuclear factor with transcriptional repressor properties, it may sequester nuclear NF-kappaB/RELA, lowering expression of its targets. This form is rapidely lost upon angiogenic or pro-inflammatory activation. The protein is Interleukin-33 (IL33) of Pongo abelii (Sumatran orangutan).